A 155-amino-acid chain; its full sequence is Pathogenesis-related protein B (155 aa).

The protein belongs to the BetVI family.

The chain is Pathogenesis-related protein B (PCPR1-3) from Petroselinum crispum (Parsley).